The chain runs to 94 residues: Alpha-conotoxin Cp20.3 (94 aa).

The N-terminal stretch at 1-24 (MPKLAVVLLVLLILPLSYFDAAGG) is a signal peptide. A propeptide spanning residues 25–45 (QAVQGDRRGNGLARYLQRGDR) is cleaved from the precursor. A 4-carboxyglutamate; partial modification is found at glutamate 46. The residue at position 49 (glutamate 49) is a 4-carboxyglutamate. Proline 55 is subject to 4-hydroxyproline. 4 disulfide bridges follow: cysteine 63-cysteine 72, cysteine 68-cysteine 80, cysteine 73-cysteine 90, and cysteine 78-cysteine 92.

This sequence belongs to the conotoxin D superfamily. As to quaternary structure, hetero-, homo- or pseudo-homodimer (identical sequence, different post-translational modifications). In terms of tissue distribution, expressed by the venom duct.

Its subcellular location is the secreted. In terms of biological role, alpha-D-conopeptides act on postsynaptic membranes, they bind to the nicotinic acetylcholine receptors (nAChR) and thus inhibit them. Through its two C-terminal domains, this homodimeric protein would bind to two nAChR allosteric sites, located outside the nAChR C-loop of the principal binding face and at the adjacent binding interface in a clockwise direction. This toxin specifically blocks mammalian neuronal nAChR of the alpha-7/CHRNA7 (IC(50)=0.25 nM), alpha-3-beta-2/CHRNA3-CHRNB2 (IC(50)=2.8 nM), and alpha-4-beta-2/CHRNA4-CHRNB2 (IC(50)=28.6 nM) subtypes. Has no effect on alpha-3-beta-4/CHRNA3-CHRNB4, alpha-4-beta-4/CHRNA4-CHRNB4 and alpha-1-beta-1-epsilon-delta/CHRNA1-CHRNB1-CHRNE-CHRND subtypes of nAChRs. This Conus capitaneus (Captain cone) protein is Alpha-conotoxin Cp20.3.